The following is a 503-amino-acid chain: Diels-Alderase cghA (503 aa).

It belongs to the Diels-Alderase family.

It catalyses the reaction (2S)-3-[(2S)-3,5-dioxo-4-[(2E,4R,6R,8E,10E,12E)-4,6,12-trimethyltetradeca-2,8,10,12-tetraenoyl]pyrrolidin-2-yl]-2-hydroxy-2-methylpropanoate = sch 210972. It participates in secondary metabolite biosynthesis. Functionally, diels-Alderase; part of the gene cluster that mediates the biosynthesis of the tetramic acid Sch210972, a potential anti-HIV fungal natural product that contains a decalin core. The PKS module of cghG together with the enoylreductase cghC catalyze the formation of the polyketide unit which is then conjugated to 4-hydroxyl-4-methyl glutamate (HMG) by the condensation domain of the cghG NRPS module. One unique structural feature of Sch210972 is the tetramic acid motif proposed to be derived from the non-proteinogenic amino acid HMG, by a Dieckmann-type condensation catalyzed by the reductase domain of cghG. The aldolase cghB catalyzes the aldol condensation of 2 molecules of pyruvic acid to yield the intermediate 4-hydroxyl-4-methyl-2-oxoglutarate (HMOG), which can then be stereoselectively transaminated by an unidentified enzyme to form HMG. The Diels-Alderase cghA then uses the Dieckmann product released by cghG as substrate and catalyzes the Diels-Alder cycloaddition to form the decalin ring of Sch210972. CghA also suppresses the nonenzymatic formation of the alternative stereoisomer. The protein is Diels-Alderase cghA of Chaetomium globosum (strain ATCC 6205 / CBS 148.51 / DSM 1962 / NBRC 6347 / NRRL 1970) (Soil fungus).